We begin with the raw amino-acid sequence, 343 residues long: KRR1 small subunit processome component homolog (343 aa).

One can recognise a KH domain in the interval 125–193 (DIIKIGNLVH…VRDIVVETMN (69 aa)). The segment covering 232-245 (NISKRKQPKVKKAK) has biased composition (basic residues). Positions 232–343 (NISKRKQPKV…KLLKANKKKV (112 aa)) are disordered. A coiled-coil region spans residues 270-302 (FLNKEQKQAKRQQERSAKQADAAKRQDERRNKD). The span at 271 to 302 (LNKEQKQAKRQQERSAKQADAAKRQDERRNKD) shows a compositional bias: basic and acidic residues. The segment covering 331–343 (LKAKLLKANKKKV) has biased composition (basic residues).

The protein belongs to the KRR1 family. In terms of assembly, monomer. Component of the ribosomal small subunit (SSU) processome.

The protein localises to the nucleus. The protein resides in the nucleolus. Functionally, required for 40S ribosome biogenesis. Involved in nucleolar processing of pre-18S ribosomal RNA and ribosome assembly. Binds to RNA. Required for female germline development, cell viability during eye development and for survival of dividing cells and epithelial cells during early wing disk development. This Drosophila ananassae (Fruit fly) protein is KRR1 small subunit processome component homolog.